We begin with the raw amino-acid sequence, 951 residues long: Glycine dehydrogenase (decarboxylating) 1 (951 aa).

Lys-703 carries the post-translational modification N6-(pyridoxal phosphate)lysine.

The protein belongs to the GcvP family. As to quaternary structure, the glycine cleavage system is composed of four proteins: P, T, L and H. The cofactor is pyridoxal 5'-phosphate.

The catalysed reaction is N(6)-[(R)-lipoyl]-L-lysyl-[glycine-cleavage complex H protein] + glycine + H(+) = N(6)-[(R)-S(8)-aminomethyldihydrolipoyl]-L-lysyl-[glycine-cleavage complex H protein] + CO2. Functionally, the glycine cleavage system catalyzes the degradation of glycine. The P protein binds the alpha-amino group of glycine through its pyridoxal phosphate cofactor; CO(2) is released and the remaining methylamine moiety is then transferred to the lipoamide cofactor of the H protein. In Pseudomonas putida (strain ATCC 47054 / DSM 6125 / CFBP 8728 / NCIMB 11950 / KT2440), this protein is Glycine dehydrogenase (decarboxylating) 1 (gcvP1).